Consider the following 95-residue polypeptide: Large ribosomal subunit protein bL25 (95 aa).

Belongs to the bacterial ribosomal protein bL25 family. As to quaternary structure, part of the 50S ribosomal subunit; part of the 5S rRNA/L5/L18/L25 subcomplex. Contacts the 5S rRNA. Binds to the 5S rRNA independently of L5 and L18.

In terms of biological role, this is one of the proteins that binds to the 5S RNA in the ribosome where it forms part of the central protuberance. In Shewanella frigidimarina (strain NCIMB 400), this protein is Large ribosomal subunit protein bL25.